A 917-amino-acid chain; its full sequence is von Willebrand factor A domain-containing protein DDB_G0285975 (917 aa).

The segment at 12–51 is disordered; the sequence is DTTTTTTPTTPTTPTTPTTTPTTTTTPTTTPTTTTTSTTP. Positions 13 to 51 are enriched in low complexity; it reads TTTTTTPTTPTTPTTPTTTPTTTTTPTTTPTTTTTSTTP. The 129-residue stretch at 87–215 folds into the VIT domain; that stretch reads RYNTGLKNIS…NVTIHLTIIS (129 aa). Residues 339–507 form the VWFA domain; the sequence is EFIFLIDCSG…NFEEQVMKLV (169 aa). The t-SNARE coiled-coil homology domain maps to 679 to 741; that stretch reads LFSSENRNQT…INSIPQKSNI (63 aa). Low complexity-rich tracts occupy residues 751–760 and 774–818; these read SPSEVSTSKS and NNNN…NNNN. The interval 751-822 is disordered; the sequence is SPSEVSTSKS…NNNNNNSDNS (72 aa).

The protein is von Willebrand factor A domain-containing protein DDB_G0285975 of Dictyostelium discoideum (Social amoeba).